Consider the following 118-residue polypeptide: Protein yippee-like 1 (118 aa).

Residues arginine 19 to asparagine 116 form the Yippee domain. Zn(2+)-binding residues include cysteine 23, cysteine 26, cysteine 79, and cysteine 82. Positions lysine 99 to lysine 104 match the Nuclear localization signal motif.

This sequence belongs to the yippee family.

The protein localises to the nucleus. Its function is as follows. May play a role in epithelioid conversion of fibroblasts. The sequence is that of Protein yippee-like 1 (Ypel1) from Mus musculus (Mouse).